A 148-amino-acid chain; its full sequence is Arginine repressor (148 aa).

Belongs to the ArgR family.

It is found in the cytoplasm. Its pathway is amino-acid biosynthesis; L-arginine biosynthesis [regulation]. In terms of biological role, regulates arginine biosynthesis genes. The protein is Arginine repressor of Chlorobium chlorochromatii (strain CaD3).